The following is a 205-amino-acid chain: CASP-like protein 3A1 (205 aa).

The Cytoplasmic portion of the chain corresponds to Met1–Asp39. The chain crosses the membrane as a helical span at residues Leu40 to Met60. Topologically, residues Ala61–Glu89 are extracellular. Residues Phe90 to Gly110 traverse the membrane as a helical segment. Topologically, residues Met111–His125 are cytoplasmic. Residues Ala126–Ala146 form a helical membrane-spanning segment. Residues Ala147–Lys176 are Extracellular-facing. N-linked (GlcNAc...) asparagine glycosylation is present at Asn154. Residues Ala177 to Leu197 form a helical membrane-spanning segment. Over Asp198 to Asn205 the chain is Cytoplasmic.

This sequence belongs to the Casparian strip membrane proteins (CASP) family. In terms of assembly, homodimer and heterodimers.

Its subcellular location is the cell membrane. In Picea sitchensis (Sitka spruce), this protein is CASP-like protein 3A1.